A 523-amino-acid chain; its full sequence is Transmembrane protein 266 (523 aa).

The Cytoplasmic segment spans residues 1 to 94; sequence MTNPQPAIEG…VFLLSASLNS (94 aa). Residues 95–115 form a helical membrane-spanning segment; the sequence is FLVACVILVVILLTLELLIDI. The Extracellular segment spans residues 116–121; that stretch reads KLLQFS. The chain crosses the membrane as a helical span at residues 122–142; sequence SAFQFAGVIHWISLVILSVFF. Over 143-161 the chain is Cytoplasmic; the sequence is SETVLRIVVLGIWDYIENK. The chain crosses the membrane as a helical span at residues 162–182; the sequence is IEVFDGAVIILSLAPMVASTV. At 183 to 191 the chain is on the extracellular side; sequence ANGPRSPWD. A helical transmembrane segment spans residues 192 to 212; sequence AISLIIMLRIWRVKRVIDAYV. Over 213-523 the chain is Cytoplasmic; sequence LPVKLEMEMV…EQKLHRVPEA (311 aa). Residues 218 to 270 are a coiled coil; that stretch reads EMEMVIQQYEKAKVIQDEQLERLTQICQEQGFEIRQLRAHLAQQDLDLAAERE. The disordered stretch occupies residues 380–477; it reads SASRSSVTRA…PELEHRVSLF (98 aa). Positions 382-397 are enriched in low complexity; the sequence is SRSSVTRAQSDSSQTL. The span at 398 to 411 shows a compositional bias: polar residues; it reads GSSMDCSTAREEPS. Positions 421-430 are enriched in pro residues; sequence LPSQQQVEEA.

Homodimer; disulfide-linked. Mainly expressed in the cerebellum. Also expressed in cerebral cortex, skeletal muscle and thyroid, but at much lower levels.

Its subcellular location is the cell membrane. It localises to the cell projection. The protein resides in the dendrite. The protein localises to the perikaryon. Its function is as follows. Voltage-sensor protein present on the post-synaptic side of glutamatergic mossy fibers and granule cells in the cerebellum. Despite the presence of a voltage-sensor segment, does not form a functional ion channel and its precise role remains unclear. Undergoes both rapid and slow structural rearrangements in response to changes in voltage. Contains a zinc-binding site that can regulate the slow conformational transition. This is Transmembrane protein 266 from Homo sapiens (Human).